A 349-amino-acid polypeptide reads, in one-letter code: Probable esterase Cgl0839 (349 aa).

The region spanning 60-329 (GTHQTWFQQY…EDIAGHLGLF (270 aa)) is the AB hydrolase-1 domain. Serine 142 (nucleophile) is an active-site residue. Active-site residues include aspartate 296 and histidine 325.

This sequence belongs to the AB hydrolase superfamily. Acetyl esterase family. In terms of assembly, homodimer.

Functionally, esterase that catalyzes the hydrolysis of 4-nitrophenyl acetate in vitro. The chain is Probable esterase Cgl0839 from Corynebacterium glutamicum (strain ATCC 13032 / DSM 20300 / JCM 1318 / BCRC 11384 / CCUG 27702 / LMG 3730 / NBRC 12168 / NCIMB 10025 / NRRL B-2784 / 534).